A 473-amino-acid chain; its full sequence is Ribulose bisphosphate carboxylase large chain 3 (473 aa).

Substrate contacts are provided by N116 and T166. Catalysis depends on K168, which acts as the Proton acceptor. K170 contacts substrate. Residues K194, D196, and E197 each coordinate Mg(2+). At K194 the chain carries N6-carboxylysine. The active-site Proton acceptor is H287. Residues R288, H320, and S372 each coordinate substrate.

This sequence belongs to the RuBisCO large chain family. Type I subfamily. In terms of assembly, heterohexadecamer of 8 large chains and 8 small chains. The cofactor is Mg(2+).

The enzyme catalyses 2 (2R)-3-phosphoglycerate + 2 H(+) = D-ribulose 1,5-bisphosphate + CO2 + H2O. It catalyses the reaction D-ribulose 1,5-bisphosphate + O2 = 2-phosphoglycolate + (2R)-3-phosphoglycerate + 2 H(+). Functionally, ruBisCO catalyzes two reactions: the carboxylation of D-ribulose 1,5-bisphosphate, the primary event in carbon dioxide fixation, as well as the oxidative fragmentation of the pentose substrate. Both reactions occur simultaneously and in competition at the same active site. The sequence is that of Ribulose bisphosphate carboxylase large chain 3 from Nitrobacter hamburgensis (strain DSM 10229 / NCIMB 13809 / X14).